Reading from the N-terminus, the 175-residue chain is Ribosome maturation factor RimM (175 aa).

Positions 98-175 constitute a PRC barrel domain; the sequence is EGEYYWHQLE…EMRVDWDADF (78 aa).

This sequence belongs to the RimM family. Binds ribosomal protein uS19.

The protein localises to the cytoplasm. Functionally, an accessory protein needed during the final step in the assembly of 30S ribosomal subunit, possibly for assembly of the head region. Essential for efficient processing of 16S rRNA. May be needed both before and after RbfA during the maturation of 16S rRNA. It has affinity for free ribosomal 30S subunits but not for 70S ribosomes. The protein is Ribosome maturation factor RimM of Pseudomonas aeruginosa (strain ATCC 15692 / DSM 22644 / CIP 104116 / JCM 14847 / LMG 12228 / 1C / PRS 101 / PAO1).